The chain runs to 246 residues: Proteasome subunit alpha (246 aa).

Belongs to the peptidase T1A family. As to quaternary structure, the 20S proteasome core is composed of 14 alpha and 14 beta subunits that assemble into four stacked heptameric rings, resulting in a barrel-shaped structure. The two inner rings, each composed of seven catalytic beta subunits, are sandwiched by two outer rings, each composed of seven alpha subunits. The catalytic chamber with the active sites is on the inside of the barrel. Has a gated structure, the ends of the cylinder being occluded by the N-termini of the alpha-subunits. Is capped by the proteasome-associated ATPase, ARC. Can also interact with the bacterial proteasome activator Bpa through the C-terminal hydrophobic-tyrosine-X motif (HbYX motif) of Bpa; Bpa forms a homooligomeric ring-like structure which stacks co-axially with the proteasomal alpha-rings. Pupylated at an undetermined lysine residue by the prokaryotic ubiquitin-like protein Pup with the help of the ligase PafA, which leads to its degradation by the proteasome and thereby constitutes a negative auto-regulation.

Its subcellular location is the cytoplasm. Its pathway is protein degradation; proteasomal Pup-dependent pathway. Its activity is regulated as follows. The formation of the proteasomal ATPase ARC-20S proteasome complex, likely via the docking of the C-termini of ARC into the intersubunit pockets in the alpha-rings, may trigger opening of the gate for substrate entry. Interconversion between the open-gate and close-gate conformations leads to a dynamic regulation of the 20S proteasome proteolysis activity. PPS auto-regulates its own activity via pupylation and degradation of its components. Peptidolytic activity is inhibited by N-acetyl-Leu-Leu-norleucinal (Ac-LLnL) in vitro. Component of the proteasome core, a large protease complex with broad specificity involved in protein degradation. The M.smegmatis proteasome is able to cleave oligopeptides after hydrophobic residues, thus displaying chymotrypsin-like activity. In complex with the ATPase Mpa, degrades protein targets conjugated to a prokaryotic ubiquitin-like protein (Pup). Identified substrates of the M.smegmatis proteasome are the pupylated SodA and Ino1 proteins. The Pup-proteasome system (PPS) is essential for survival under starvation; PPS likely functions to recycle amino acids under nitrogen starvation, thereby enabling the cell to maintain basal metabolic activities. The sequence is that of Proteasome subunit alpha from Mycolicibacterium smegmatis (strain ATCC 700084 / mc(2)155) (Mycobacterium smegmatis).